A 264-amino-acid polypeptide reads, in one-letter code: Energy-coupling factor transporter ATP-binding protein EcfA1 (264 aa).

An ABC transporter domain is found at 2-234; sequence IQVENLSFSY…DEFNPFLIKI (233 aa). 34–41 lines the ATP pocket; that stretch reads GKNGSGKS.

It belongs to the ABC transporter superfamily. Energy-coupling factor EcfA family. In terms of assembly, forms a stable energy-coupling factor (ECF) transporter complex composed of 2 membrane-embedded substrate-binding proteins (S component), 2 ATP-binding proteins (A component) and 2 transmembrane proteins (T component).

The protein localises to the cell inner membrane. Its function is as follows. ATP-binding (A) component of a common energy-coupling factor (ECF) ABC-transporter complex. Unlike classic ABC transporters this ECF transporter provides the energy necessary to transport a number of different substrates. The protein is Energy-coupling factor transporter ATP-binding protein EcfA1 of Fusobacterium nucleatum subsp. nucleatum (strain ATCC 25586 / DSM 15643 / BCRC 10681 / CIP 101130 / JCM 8532 / KCTC 2640 / LMG 13131 / VPI 4355).